The chain runs to 37 residues: Large ribosomal subunit protein bL36A (37 aa).

This sequence belongs to the bacterial ribosomal protein bL36 family.

This chain is Large ribosomal subunit protein bL36A, found in Kocuria rhizophila (strain ATCC 9341 / DSM 348 / NBRC 103217 / DC2201).